The primary structure comprises 365 residues: Succinate--CoA ligase [ADP-forming] subunit beta (365 aa).

Residues 9 to 230 form the ATP-grasp domain; it reads KEIFRAEGIS…EMEEYEPEEF (222 aa). Residues lysine 45, 52 to 54, glutamate 90, isoleucine 93, and glutamate 98 each bind ATP; that span reads GRG. Mg(2+)-binding residues include asparagine 190 and aspartate 203. Substrate-binding positions include asparagine 244 and 300–302; that span reads GIT.

Belongs to the succinate/malate CoA ligase beta subunit family. As to quaternary structure, heterotetramer of two alpha and two beta subunits. The cofactor is Mg(2+).

It carries out the reaction succinate + ATP + CoA = succinyl-CoA + ADP + phosphate. The enzyme catalyses GTP + succinate + CoA = succinyl-CoA + GDP + phosphate. Its pathway is carbohydrate metabolism; tricarboxylic acid cycle; succinate from succinyl-CoA (ligase route): step 1/1. In terms of biological role, succinyl-CoA synthetase functions in the citric acid cycle (TCA), coupling the hydrolysis of succinyl-CoA to the synthesis of either ATP or GTP and thus represents the only step of substrate-level phosphorylation in the TCA. The beta subunit provides nucleotide specificity of the enzyme and binds the substrate succinate, while the binding sites for coenzyme A and phosphate are found in the alpha subunit. This chain is Succinate--CoA ligase [ADP-forming] subunit beta, found in Methanothermobacter thermautotrophicus (strain ATCC 29096 / DSM 1053 / JCM 10044 / NBRC 100330 / Delta H) (Methanobacterium thermoautotrophicum).